Here is a 290-residue protein sequence, read N- to C-terminus: 4-diphosphocytidyl-2-C-methyl-D-erythritol kinase (290 aa).

The active site involves Lys12. 97–107 (PVASGIGGGSA) serves as a coordination point for ATP. The active site involves Asp139.

Belongs to the GHMP kinase family. IspE subfamily.

It catalyses the reaction 4-CDP-2-C-methyl-D-erythritol + ATP = 4-CDP-2-C-methyl-D-erythritol 2-phosphate + ADP + H(+). It functions in the pathway isoprenoid biosynthesis; isopentenyl diphosphate biosynthesis via DXP pathway; isopentenyl diphosphate from 1-deoxy-D-xylulose 5-phosphate: step 3/6. Functionally, catalyzes the phosphorylation of the position 2 hydroxy group of 4-diphosphocytidyl-2C-methyl-D-erythritol. This chain is 4-diphosphocytidyl-2-C-methyl-D-erythritol kinase, found in Parvibaculum lavamentivorans (strain DS-1 / DSM 13023 / NCIMB 13966).